The primary structure comprises 178 residues: Large ribosomal subunit protein uL6 (178 aa).

It belongs to the universal ribosomal protein uL6 family. As to quaternary structure, part of the 50S ribosomal subunit.

This protein binds to the 23S rRNA, and is important in its secondary structure. It is located near the subunit interface in the base of the L7/L12 stalk, and near the tRNA binding site of the peptidyltransferase center. The polypeptide is Large ribosomal subunit protein uL6 (Paenarthrobacter aurescens (strain TC1)).